The sequence spans 198 residues: Probable chemoreceptor glutamine deamidase CheD (198 aa).

The protein belongs to the CheD family.

The enzyme catalyses L-glutaminyl-[protein] + H2O = L-glutamyl-[protein] + NH4(+). In terms of biological role, probably deamidates glutamine residues to glutamate on methyl-accepting chemotaxis receptors (MCPs), playing an important role in chemotaxis. The protein is Probable chemoreceptor glutamine deamidase CheD of Stenotrophomonas maltophilia (strain K279a).